We begin with the raw amino-acid sequence, 245 residues long: Small ribosomal subunit protein uS3 (245 aa).

The 73-residue stretch at 39-111 folds into the KH type-2 domain; the sequence is IRNFINKNYS…EVFFNVIEIK (73 aa).

The protein belongs to the universal ribosomal protein uS3 family. As to quaternary structure, part of the 30S ribosomal subunit. Forms a tight complex with proteins S10 and S14.

Binds the lower part of the 30S subunit head. Binds mRNA in the 70S ribosome, positioning it for translation. The chain is Small ribosomal subunit protein uS3 from Phytoplasma mali (strain AT).